Here is a 236-residue protein sequence, read N- to C-terminus: MSILIENISKRFGSFQALDRVNLEIKNGSLVGLLGPSGSGKSTLLRVLAGLEKPDSGRIWLEGQDATQMKLQDREIGFVFQNYALFPHLTVSENVAFGLEIQKIDSLLKKKRVNELLKLMQLEKFGDSYPNQLSGGQRQRVALARALAMEPKVLLLDEPFAALDAKIRKQLRSWLRELHHKISVTTVFVTHDYSEAMELAQEIVLLENGKIIQIGSAQELSDHPTNTFVTNFLGLK.

An ABC transporter domain is found at 3–233 (ILIENISKRF…PTNTFVTNFL (231 aa)). 35–42 (GPSGSGKS) serves as a coordination point for ATP.

The protein belongs to the ABC transporter superfamily. Sulfate/tungstate importer (TC 3.A.1.6) family.

It is found in the plastid. The protein localises to the chloroplast. It carries out the reaction sulfate(out) + ATP + H2O = sulfate(in) + ADP + phosphate + H(+). The catalysed reaction is thiosulfate(out) + ATP + H2O = thiosulfate(in) + ADP + phosphate + H(+). In terms of biological role, part of the ABC transporter complex involved in sulfate/thiosulfate import. Responsible for energy coupling to the transport system. The polypeptide is Probable sulfate/thiosulfate import ATP-binding protein CysA (Chlorella vulgaris (Green alga)).